We begin with the raw amino-acid sequence, 128 residues long: Small ribosomal subunit protein eS6 (128 aa).

The protein belongs to the eukaryotic ribosomal protein eS6 family.

This is Small ribosomal subunit protein eS6 from Methanobrevibacter smithii (strain ATCC 35061 / DSM 861 / OCM 144 / PS).